Reading from the N-terminus, the 705-residue chain is Phosphoribosylformylglycinamidine synthase subunit PurL (705 aa).

Residue His-32 is part of the active site. Residue Tyr-35 coordinates ATP. Mg(2+) is bound at residue Glu-76. Residues Ser-77–His-80 and Arg-99 each bind substrate. His-78 (proton acceptor) is an active-site residue. Asp-100 is a Mg(2+) binding site. Gln-224 contacts substrate. Asp-252 serves as a coordination point for Mg(2+). Glu-296–Gln-298 provides a ligand contact to substrate. ATP is bound by residues Asp-471 and Gly-508. Asn-509 is a Mg(2+) binding site. Residue Ser-511 participates in substrate binding.

This sequence belongs to the FGAMS family. Monomer. Part of the FGAM synthase complex composed of 1 PurL, 1 PurQ and 2 PurS subunits.

It is found in the cytoplasm. It catalyses the reaction N(2)-formyl-N(1)-(5-phospho-beta-D-ribosyl)glycinamide + L-glutamine + ATP + H2O = 2-formamido-N(1)-(5-O-phospho-beta-D-ribosyl)acetamidine + L-glutamate + ADP + phosphate + H(+). The protein operates within purine metabolism; IMP biosynthesis via de novo pathway; 5-amino-1-(5-phospho-D-ribosyl)imidazole from N(2)-formyl-N(1)-(5-phospho-D-ribosyl)glycinamide: step 1/2. Part of the phosphoribosylformylglycinamidine synthase complex involved in the purines biosynthetic pathway. Catalyzes the ATP-dependent conversion of formylglycinamide ribonucleotide (FGAR) and glutamine to yield formylglycinamidine ribonucleotide (FGAM) and glutamate. The FGAM synthase complex is composed of three subunits. PurQ produces an ammonia molecule by converting glutamine to glutamate. PurL transfers the ammonia molecule to FGAR to form FGAM in an ATP-dependent manner. PurS interacts with PurQ and PurL and is thought to assist in the transfer of the ammonia molecule from PurQ to PurL. The chain is Phosphoribosylformylglycinamidine synthase subunit PurL from Pyrococcus horikoshii (strain ATCC 700860 / DSM 12428 / JCM 9974 / NBRC 100139 / OT-3).